The chain runs to 492 residues: Target of Myb1 membrane trafficking protein (492 aa).

Met-1 carries the post-translational modification N-acetylmethionine. Phosphoserine is present on Ser-11. The VHS domain occupies 20–152 (ATDGSLQSED…DLRRKGLEFP (133 aa)). A KRKK motif is present at residues 48 to 56 (KDAFRAVKK). Ser-160 carries the phosphoserine modification. The residue at position 164 (Thr-164) is a Phosphothreonine. Residues 167–195 (RTVFNSETPSRQNSVSSNTSQRGDLSQHA) are compositionally biased toward polar residues. A disordered region spans residues 167 to 215 (RTVFNSETPSRQNSVSSNTSQRGDLSQHATPLPTPAVLPGDSPITPTPE). Ser-176, Ser-180, and Ser-208 each carry phosphoserine. Residues 215 to 303 (EQIGKLRSEL…VFLRHERFER (89 aa)) enclose the GAT domain. The clathrin box stretch occupies residues 321–326 (DLIDMG). Phosphoserine is present on residues Ser-355 and Ser-376. Lys-385 participates in a covalent cross-link: Glycyl lysine isopeptide (Lys-Gly) (interchain with G-Cter in SUMO2). Positions 392 to 463 (TDGLAGALDA…ADRLPNLASP (72 aa)) are interaction with MYO6. Residues 450–492 (RAKAADRLPNLASPSAEGPPRPSPGTAPRRKTQEKDDDMLFAL) form a disordered region. Residue Ser-462 is modified to Phosphoserine.

This sequence belongs to the TOM1 family. Found in a complex with TOLLIP; interacts (via GAT domain) with TOLLIP (via N-terminus); the interactions leads to TOM1-recruitment to endosomes and inhibition of TOLLIP binding to PtdIns(3)P. Interacts (via GAT domain and the C-terminal part of the VHS domain) with UBC/ubiquitin. Interacts (via clathrin box and C-terminus) with clathrin heavy chain. Interacts with MYO6. Interacts with TAX1BP1; CALCOCO2/NDP52 and OPTN; the interaction is indirect and is mediated by MYO6, which acts as a bridge between TOM1 and the three autophagy receptors. Interacts (via C-terminus) with ZFYVE16 (via C-terminus); interaction is required to target TOM1 and clathrin to endosomes. Interacts with LRBA. Monoubiquitinated. As to expression, ubiquitous. In adult brain, it is highly expressed at the mesencephalic level, in the hippocampal formation and medial lemniscus. In cerebellum, it is highly expressed in Purkinje cells and granular layers.

Its subcellular location is the cytoplasm. The protein resides in the endosome membrane. It is found in the early endosome membrane. Adapter protein that plays a role in the intracellular membrane trafficking of ubiquitinated proteins, thereby participating in autophagy, ubiquitination-dependent signaling and receptor recycling pathways. Acts as a MYO6/Myosin VI adapter protein that targets MYO6 to endocytic structures. Together with MYO6, required for autophagosomal delivery of endocytic cargo, the maturation of autophagosomes and their fusion with lysosomes. MYO6 links TOM1 with autophagy receptors, such as TAX1BP1; CALCOCO2/NDP52 and OPTN. Binds to polyubiquitinated proteins via its GAT domain. In a complex with TOLLIP, recruits ubiquitin-conjugated proteins onto early endosomes. The Tom1-Tollip complex may regulate endosomal trafficking by linking polyubiquitinated proteins to clathrin. Mediates clathrin recruitment to early endosomes by ZFYVE16. Modulates binding of TOLLIP to phosphatidylinositol 3-phosphate (PtdIns(3)P) via binding competition; the association with TOLLIP may favor the release of TOLLIP from endosomal membranes, allowing TOLLIP to commit to cargo trafficking. Acts as a phosphatidylinositol 5-phosphate (PtdIns(5)P) effector by binding to PtdIns(5)P, thereby regulating endosomal maturation. PtdIns(5)P-dependent recruitment to signaling endosomes may block endosomal maturation. Also inhibits Toll-like receptor (TLR) signaling and participates in immune receptor recycling. The protein is Target of Myb1 membrane trafficking protein of Mus musculus (Mouse).